A 119-amino-acid chain; its full sequence is Large ribosomal subunit protein bL20 (119 aa).

Belongs to the bacterial ribosomal protein bL20 family.

Functionally, binds directly to 23S ribosomal RNA and is necessary for the in vitro assembly process of the 50S ribosomal subunit. It is not involved in the protein synthesizing functions of that subunit. The protein is Large ribosomal subunit protein bL20 of Delftia acidovorans (strain DSM 14801 / SPH-1).